The chain runs to 1020 residues: Sodium/potassium-transporting ATPase subunit alpha-2 (1020 aa).

Residues 1–5 constitute a propeptide that is removed on maturation; sequence MGRGA. A disordered region spans residues 1–31; it reads MGRGAGREYSPAATTAENGGGKKKQKEKELD. The Cytoplasmic portion of the chain corresponds to 6-85; it reads GREYSPAATT…NALTPPPTTP (80 aa). Ser-10 carries the phosphoserine modification. The segment at 80–82 is interaction with phosphoinositide-3 kinase; the sequence is PPP. A helical membrane pass occupies residues 86 to 106; the sequence is EWVKFCRQLFGGFSILLWIGA. The Extracellular portion of the chain corresponds to 107–129; that stretch reads LLCFLAYGILAAMEDEPSNDNLY. A helical transmembrane segment spans residues 130-150; that stretch reads LGIVLAAVVIVTGCFSYYQEA. Topologically, residues 151–286 are cytoplasmic; it reads KSSKIMDSFK…VGQTPIAMEI (136 aa). Residues 212 to 227 show a composition bias toward polar residues; it reads DNSSLTGESEPQTRSP. The interval 212–231 is disordered; that stretch reads DNSSLTGESEPQTRSPEFTH. The chain crosses the membrane as a helical span at residues 287-306; sequence EHFIQLITGVAVFLGVSFFV. Residues 307 to 318 are Extracellular-facing; that stretch reads LSLILGYSWLEA. The chain crosses the membrane as a helical span at residues 319-336; the sequence is VIFLIGIIVANVPEGLLA. Over 337 to 769 the chain is Cytoplasmic; the sequence is TVTVCLTLTA…EEGRLIFDNL (433 aa). The active-site 4-aspartylphosphate intermediate is the Asp-374. Phosphoserine is present on residues Ser-439, Ser-450, Ser-496, and Ser-559. Residue Thr-570 is modified to Phosphothreonine. 2 positions are modified to phosphoserine: Ser-587 and Ser-672. The Mg(2+) site is built by Asp-714 and Asp-718. The helical transmembrane segment at 770–789 threads the bilayer; sequence KKSIAYTLTSNIPEITPFLL. Residues 790 to 799 lie on the Extracellular side of the membrane; sequence FIIANIPLPL. Residues 800 to 820 traverse the membrane as a helical segment; sequence GTVTILCIDLGTDMVPAISLA. Residues 821–840 are Cytoplasmic-facing; that stretch reads YEAAESDIMKRQPRNSQTDK. The residue at position 826 (Ser-826) is a Phosphoserine. A helical membrane pass occupies residues 841-863; it reads LVNERLISMAYGQIGMIQALGGF. Residues 864 to 915 are Extracellular-facing; it reads FTYFVILAENGFLPSRLLGIRLDWDDRTTNDLEDSYGQEWTYEQRKVVEFTC. Residues 916 to 935 traverse the membrane as a helical segment; sequence HTAFFASIVVVQWADLIICK. At 936–948 the chain is on the cytoplasmic side; sequence TRRNSVFQQGMKN. Ser-940 carries the post-translational modification Phosphoserine; by PKA. A helical transmembrane segment spans residues 949 to 967; that stretch reads KILIFGLLEETALAAFLSY. The Extracellular segment spans residues 968–982; the sequence is CPGMGVALRMYPLKV. Residues 983 to 1003 traverse the membrane as a helical segment; the sequence is TWWFCAFPYSLLIFIYDEVRK. Topologically, residues 1004-1020 are cytoplasmic; the sequence is LILRRYPGGWVEKETYY.

The protein belongs to the cation transport ATPase (P-type) (TC 3.A.3) family. Type IIC subfamily. As to quaternary structure, the sodium/potassium-transporting ATPase is composed of a catalytic alpha subunit, an auxiliary non-catalytic beta subunit and an additional regulatory subunit. Interacts with regulatory subunit FXYD1.

It localises to the membrane. The protein resides in the cell membrane. It carries out the reaction K(+)(out) + Na(+)(in) + ATP + H2O = K(+)(in) + Na(+)(out) + ADP + phosphate + H(+). Its function is as follows. This is the catalytic component of the active enzyme, which catalyzes the hydrolysis of ATP coupled with the exchange of sodium and potassium ions across the plasma membrane. This action creates the electrochemical gradient of sodium and potassium ions, providing the energy for active transport of various nutrients. This Mus musculus (Mouse) protein is Sodium/potassium-transporting ATPase subunit alpha-2 (Atp1a2).